The primary structure comprises 177 residues: Large ribosomal subunit protein uL6 (177 aa).

This sequence belongs to the universal ribosomal protein uL6 family. In terms of assembly, part of the 50S ribosomal subunit.

This protein binds to the 23S rRNA, and is important in its secondary structure. It is located near the subunit interface in the base of the L7/L12 stalk, and near the tRNA binding site of the peptidyltransferase center. The chain is Large ribosomal subunit protein uL6 from Erwinia tasmaniensis (strain DSM 17950 / CFBP 7177 / CIP 109463 / NCPPB 4357 / Et1/99).